A 246-amino-acid chain; its full sequence is Probable transcriptional regulatory protein NT01CX_1819 (246 aa).

The protein belongs to the TACO1 family.

Its subcellular location is the cytoplasm. This is Probable transcriptional regulatory protein NT01CX_1819 from Clostridium novyi (strain NT).